The chain runs to 89 residues: Small ribosomal subunit protein uS15 (89 aa).

Belongs to the universal ribosomal protein uS15 family. Part of the 30S ribosomal subunit. Forms a bridge to the 50S subunit in the 70S ribosome, contacting the 23S rRNA.

One of the primary rRNA binding proteins, it binds directly to 16S rRNA where it helps nucleate assembly of the platform of the 30S subunit by binding and bridging several RNA helices of the 16S rRNA. In terms of biological role, forms an intersubunit bridge (bridge B4) with the 23S rRNA of the 50S subunit in the ribosome. This chain is Small ribosomal subunit protein uS15, found in Clavibacter michiganensis subsp. michiganensis (strain NCPPB 382).